A 300-amino-acid polypeptide reads, in one-letter code: tRNA dimethylallyltransferase (300 aa).

Gly9 to Ser16 is a binding site for ATP. Position 11-16 (Thr11–Ser16) interacts with substrate. Residues Asp34–Cys37 form an interaction with substrate tRNA region.

This sequence belongs to the IPP transferase family. Monomer. The cofactor is Mg(2+).

It catalyses the reaction adenosine(37) in tRNA + dimethylallyl diphosphate = N(6)-dimethylallyladenosine(37) in tRNA + diphosphate. In terms of biological role, catalyzes the transfer of a dimethylallyl group onto the adenine at position 37 in tRNAs that read codons beginning with uridine, leading to the formation of N6-(dimethylallyl)adenosine (i(6)A). The chain is tRNA dimethylallyltransferase from Campylobacter fetus subsp. fetus (strain 82-40).